The following is a 504-amino-acid chain: D-alanine--D-alanyl carrier protein ligase (504 aa).

152–153 (TS) serves as a coordination point for ATP. Asp197 is a binding site for D-alanine. 292–297 (NTYGPT) contributes to the ATP binding site. A D-alanine-binding site is contributed by Val301. Residues Asp383, 394-397 (YNGR), and Lys492 each bind ATP. Lys492 serves as a coordination point for D-alanine.

Belongs to the ATP-dependent AMP-binding enzyme family. DltA subfamily.

Its subcellular location is the cytoplasm. The catalysed reaction is holo-[D-alanyl-carrier protein] + D-alanine + ATP = D-alanyl-[D-alanyl-carrier protein] + AMP + diphosphate. It participates in cell wall biogenesis; lipoteichoic acid biosynthesis. Catalyzes the first step in the D-alanylation of lipoteichoic acid (LTA), the activation of D-alanine and its transfer onto the D-alanyl carrier protein (Dcp) DltC. In an ATP-dependent two-step reaction, forms a high energy D-alanyl-AMP intermediate, followed by transfer of the D-alanyl residue as a thiol ester to the phosphopantheinyl prosthetic group of the Dcp. D-alanylation of LTA plays an important role in modulating the properties of the cell wall in Gram-positive bacteria, influencing the net charge of the cell wall. The sequence is that of D-alanine--D-alanyl carrier protein ligase from Bacillus mycoides (strain KBAB4) (Bacillus weihenstephanensis).